The chain runs to 257 residues: Putative carboxymethylenebutenolidase (257 aa).

Active-site residues include Cys-148, Asp-195, and His-226.

The protein belongs to the dienelactone hydrolase family.

It carries out the reaction 2-(5-oxo-2,5-dihydrofuran-2-ylidene)acetate + H2O = 4-oxohex-2-enedioate + H(+). The sequence is that of Putative carboxymethylenebutenolidase from Saccharolobus solfataricus (strain ATCC 35092 / DSM 1617 / JCM 11322 / P2) (Sulfolobus solfataricus).